The primary structure comprises 100 residues: ATP-dependent Clp protease adapter protein ClpS (100 aa).

The protein belongs to the ClpS family. As to quaternary structure, binds to the N-terminal domain of the chaperone ClpA.

Involved in the modulation of the specificity of the ClpAP-mediated ATP-dependent protein degradation. The chain is ATP-dependent Clp protease adapter protein ClpS from Nitratidesulfovibrio vulgaris (strain DSM 19637 / Miyazaki F) (Desulfovibrio vulgaris).